A 69-amino-acid polypeptide reads, in one-letter code: Conotoxin Cal12.1p4 (69 aa).

Positions Asp1–Thr23 are excised as a propeptide.

Contains 4 disulfide bonds. In terms of tissue distribution, expressed by the venom duct.

The protein resides in the secreted. The polypeptide is Conotoxin Cal12.1p4 (Californiconus californicus (California cone)).